The following is a 432-amino-acid chain: D-amino acid dehydrogenase (432 aa).

3–17 (VVILGSGVVGVTSAW) is an FAD binding site.

This sequence belongs to the DadA oxidoreductase family. It depends on FAD as a cofactor.

The enzyme catalyses a D-alpha-amino acid + A + H2O = a 2-oxocarboxylate + AH2 + NH4(+). It functions in the pathway amino-acid degradation; D-alanine degradation; NH(3) and pyruvate from D-alanine: step 1/1. Oxidative deamination of D-amino acids. This chain is D-amino acid dehydrogenase, found in Salmonella dublin (strain CT_02021853).